Here is a 598-residue protein sequence, read N- to C-terminus: NADH-ubiquinone oxidoreductase chain 5 (598 aa).

The next 14 membrane-spanning stretches (helical) occupy residues 6–26, 32–52, 84–100, 113–133, 136–156, 241–261, 272–292, 301–320, 325–347, 370–390, 409–429, 456–476, 478–498, and 576–596; these read LTLI…PPII, MILT…PLTI, YTVI…WSIM, MDKF…FISA, LLQL…LISW, TPVS…FLLI, LMLE…ALCA, IIAF…VGLN, AFLH…GSII, TTCM…AGFF, LMVT…LIIM, LAWG…PMKP, IFTM…ISLI, and LNSA…LSLT.

Belongs to the complex I subunit 5 family.

It is found in the mitochondrion inner membrane. It carries out the reaction a ubiquinone + NADH + 5 H(+)(in) = a ubiquinol + NAD(+) + 4 H(+)(out). In terms of biological role, core subunit of the mitochondrial membrane respiratory chain NADH dehydrogenase (Complex I) that is believed to belong to the minimal assembly required for catalysis. Complex I functions in the transfer of electrons from NADH to the respiratory chain. The immediate electron acceptor for the enzyme is believed to be ubiquinone. This chain is NADH-ubiquinone oxidoreductase chain 5 (MT-ND5), found in Petromyzon marinus (Sea lamprey).